The chain runs to 108 residues: Insulin (108 aa).

Residues 1-23 form the signal peptide; sequence MALWILLPLLALLILWGPDPAQA. 2 cysteine pairs are disulfide-bonded: C30-C94 and C43-C107. Residues 57-88 constitute a propeptide, c peptide; that stretch reads EVEDPQVGQVELGAGPGAGSEQTLALEVARQA.

This sequence belongs to the insulin family. In terms of assembly, heterodimer of a B chain and an A chain linked by two disulfide bonds.

The protein localises to the secreted. Its function is as follows. Insulin decreases blood glucose concentration. It increases cell permeability to monosaccharides, amino acids and fatty acids. It accelerates glycolysis, the pentose phosphate cycle, and glycogen synthesis in liver. This Rodentia sp protein is Insulin (INS).